A 139-amino-acid chain; its full sequence is Putative pre-16S rRNA nuclease (139 aa).

Belongs to the YqgF nuclease family.

It localises to the cytoplasm. Its function is as follows. Could be a nuclease involved in processing of the 5'-end of pre-16S rRNA. The polypeptide is Putative pre-16S rRNA nuclease (Legionella pneumophila (strain Lens)).